Reading from the N-terminus, the 507-residue chain is Inactive alanine aminotransferase (507 aa).

Residues alanine 173, serine 174, tyrosine 199, asparagine 255, and serine 324 each coordinate pyridoxal 5'-phosphate. Lysine 327 carries the post-translational modification N6-(pyridoxal phosphate)lysine. Arginine 336 provides a ligand contact to pyridoxal 5'-phosphate.

This sequence belongs to the class-I pyridoxal-phosphate-dependent aminotransferase family. Alanine aminotransferase subfamily. As to quaternary structure, homodimer. Pyridoxal 5'-phosphate is required as a cofactor.

The protein resides in the cytoplasm. It is found in the nucleus. Functionally, inactive alanine aminotransferase. Forms a catalytically active Schiff base with PLP, but lacks alanine transaminase activity, probably due to an altered structural conformation of the dimeric enzyme. This suggests this protein may have a yet undiscovered physiological function. This is Inactive alanine aminotransferase (ALT2) from Saccharomyces cerevisiae (strain ATCC 204508 / S288c) (Baker's yeast).